Here is a 144-residue protein sequence, read N- to C-terminus: 3-dehydroquinate dehydratase (144 aa).

The Proton acceptor role is filled by Y22. Substrate-binding residues include N71, H77, and D84. The Proton donor role is filled by H97. Residues 98 to 99 and R108 each bind substrate; that span reads IS.

This sequence belongs to the type-II 3-dehydroquinase family. As to quaternary structure, homododecamer.

The enzyme catalyses 3-dehydroquinate = 3-dehydroshikimate + H2O. It participates in metabolic intermediate biosynthesis; chorismate biosynthesis; chorismate from D-erythrose 4-phosphate and phosphoenolpyruvate: step 3/7. Its function is as follows. Catalyzes a trans-dehydration via an enolate intermediate. This chain is 3-dehydroquinate dehydratase, found in Thermotoga petrophila (strain ATCC BAA-488 / DSM 13995 / JCM 10881 / RKU-1).